Reading from the N-terminus, the 203-residue chain is Small ribosomal subunit protein uS4 (203 aa).

Residues 93–154 (RRFDNVVFRA…KSKNMDAVTE (62 aa)) form the S4 RNA-binding domain.

Belongs to the universal ribosomal protein uS4 family. Part of the 30S ribosomal subunit. Contacts protein S5. The interaction surface between S4 and S5 is involved in control of translational fidelity.

In terms of biological role, one of the primary rRNA binding proteins, it binds directly to 16S rRNA where it nucleates assembly of the body of the 30S subunit. Its function is as follows. With S5 and S12 plays an important role in translational accuracy. The protein is Small ribosomal subunit protein uS4 of Prosthecochloris aestuarii (strain DSM 271 / SK 413).